Consider the following 278-residue polypeptide: Large ribosomal subunit protein uL2 (278 aa).

Disordered stretches follow at residues 32 to 57 (ALTE…IGGG) and 221 to 278 (RGVA…KKKR). Basic residues predominate over residues 269-278 (IRSRHAKKKR).

This sequence belongs to the universal ribosomal protein uL2 family. In terms of assembly, part of the 50S ribosomal subunit. Forms a bridge to the 30S subunit in the 70S ribosome.

Its function is as follows. One of the primary rRNA binding proteins. Required for association of the 30S and 50S subunits to form the 70S ribosome, for tRNA binding and peptide bond formation. It has been suggested to have peptidyltransferase activity; this is somewhat controversial. Makes several contacts with the 16S rRNA in the 70S ribosome. This chain is Large ribosomal subunit protein uL2, found in Zymomonas mobilis subsp. mobilis (strain ATCC 31821 / ZM4 / CP4).